The following is a 413-amino-acid chain: Alpha-ketoglutarate-dependent xanthine dioxygenase xan1 (413 aa).

Low complexity predominate over residues 1–18 (MSATATTTVVEPPTTTLT). The disordered stretch occupies residues 1-24 (MSATATTTVVEPPTTTLTGATEPP). Residues histidine 183 and aspartate 185 each contribute to the Fe cation site. Residues threonine 228 and tryptophan 362 each coordinate 2-oxoglutarate. Histidine 377 is a binding site for Fe cation. Arginine 389 provides a ligand contact to 2-oxoglutarate.

It belongs to the TfdA dioxygenase family. The cofactor is Fe(2+).

The protein localises to the cytoplasm. It is found in the cytosol. It catalyses the reaction xanthine + 2-oxoglutarate + O2 = urate + succinate + CO2. In terms of biological role, alpha-ketoglutarate-dependent xanthine dioxygenase is a non-heme mononuclear Fe(2+) enzyme that decarboxylates alpha-ketoglutarate to succinate and CO(2) while hydroxylating xanthine to generate uric acid. Allows xanthine utilization as a nitrogen source. The chain is Alpha-ketoglutarate-dependent xanthine dioxygenase xan1 (xan1) from Schizosaccharomyces pombe (strain 972 / ATCC 24843) (Fission yeast).